A 946-amino-acid chain; its full sequence is Bifunctional glutamine synthetase adenylyltransferase/adenylyl-removing enzyme (946 aa).

Positions 1–440 are adenylyl removase; the sequence is MKPLSSPLQQ…VFNELIGDDE (440 aa). The adenylyl transferase stretch occupies residues 449-946; sequence SEQWRELWQD…VSWQKWLVEE (498 aa).

The protein belongs to the GlnE family. Mg(2+) is required as a cofactor.

The enzyme catalyses [glutamine synthetase]-O(4)-(5'-adenylyl)-L-tyrosine + phosphate = [glutamine synthetase]-L-tyrosine + ADP. The catalysed reaction is [glutamine synthetase]-L-tyrosine + ATP = [glutamine synthetase]-O(4)-(5'-adenylyl)-L-tyrosine + diphosphate. Involved in the regulation of glutamine synthetase GlnA, a key enzyme in the process to assimilate ammonia. When cellular nitrogen levels are high, the C-terminal adenylyl transferase (AT) inactivates GlnA by covalent transfer of an adenylyl group from ATP to specific tyrosine residue of GlnA, thus reducing its activity. Conversely, when nitrogen levels are low, the N-terminal adenylyl removase (AR) activates GlnA by removing the adenylyl group by phosphorolysis, increasing its activity. The regulatory region of GlnE binds the signal transduction protein PII (GlnB) which indicates the nitrogen status of the cell. The sequence is that of Bifunctional glutamine synthetase adenylyltransferase/adenylyl-removing enzyme from Escherichia coli (strain SMS-3-5 / SECEC).